The chain runs to 312 residues: Large ribosomal subunit protein uL15m (312 aa).

A disordered region spans residues 63–89 (RIRKGRGPSSGYGKTAGRGTKGQKAHG). Gly residues predominate over residues 70-82 (PSSGYGKTAGRGT).

The protein belongs to the universal ribosomal protein uL15 family. As to quaternary structure, component of the mitochondrial large ribosomal subunit (mt-LSU). Mature N.crassa 74S mitochondrial ribosomes consist of a small (37S) and a large (54S) subunit. The 37S small subunit contains a 16S ribosomal RNA (16S mt-rRNA) and 32 different proteins. The 54S large subunit contains a 23S rRNA (23S mt-rRNA) and 42 different proteins.

Its subcellular location is the mitochondrion. In terms of biological role, component of the mitochondrial ribosome (mitoribosome), a dedicated translation machinery responsible for the synthesis of mitochondrial genome-encoded proteins, including at least some of the essential transmembrane subunits of the mitochondrial respiratory chain. The mitoribosomes are attached to the mitochondrial inner membrane and translation products are cotranslationally integrated into the membrane. This is Large ribosomal subunit protein uL15m (mrpl10) from Neurospora crassa (strain ATCC 24698 / 74-OR23-1A / CBS 708.71 / DSM 1257 / FGSC 987).